Here is a 201-residue protein sequence, read N- to C-terminus: Large ribosomal subunit protein bL25 (201 aa).

It belongs to the bacterial ribosomal protein bL25 family. CTC subfamily. In terms of assembly, part of the 50S ribosomal subunit; part of the 5S rRNA/L5/L18/L25 subcomplex. Contacts the 5S rRNA. Binds to the 5S rRNA independently of L5 and L18.

Its function is as follows. This is one of the proteins that binds to the 5S RNA in the ribosome where it forms part of the central protuberance. This chain is Large ribosomal subunit protein bL25, found in Burkholderia vietnamiensis (strain G4 / LMG 22486) (Burkholderia cepacia (strain R1808)).